Here is a 289-residue protein sequence, read N- to C-terminus: MVVVTGREPDSRRPDGAMSSSDAEDDFLEPATPTATQAGHSLPLLPQEFPEVVPLNIGGAHFTTRLSTLRRYEDTMLAAMFSGRHYIPTDAEGRYFIDRDGAHFGDVLNFLRSGDLPPRERVRAVYKEAQYYAIGPLLEQLENMQPLKGEKVRQAFLGLMPYYKDHLERIVEIARLRAVQRKARFAKLKVCVFKEEMPITPYECPLLNSLRFERSESDGQLFEHHCEVDVSFGPWEAVADVYDLLHCLVTDLSAQGLTVDHQCIGVCDKHLINHYYCKRPIYEFKITWW.

Positions methionine 1–histidine 40 are disordered. A BTB domain is found at valine 53–leucine 141.

In terms of assembly, interacts with CUL3.

Its subcellular location is the cell membrane. It localises to the cytoplasm. The protein localises to the cytosol. In terms of biological role, may be involved in the control of excitability of cortical neurons. The chain is BTB/POZ domain-containing protein KCTD7 (KCTD7) from Bos taurus (Bovine).